Here is a 491-residue protein sequence, read N- to C-terminus: MTTWDKCLKKIKKNLSTFEYKTWIKPIHVEQNSNLFTVYCNNEYFKKHIKSKYGNLILSTIQECHGNDLIIEYSNKKFSGEKITEVITAGPQANFFSTTSVEIKDESEDTKVVQEPKISKKSNSKDFSSSQELFGFDEAMLITAKEDEEYSFGLPLKEKYVFDSFVVGDANKIARAAAMQVSINPGKLHNPLFIYGGSGLGKTHLMQAIGNHAREVNPNAKIIYTNSEQFIKDYVNSIRLQDQDEFQRVYRSADILLIDDIQFIAGKEGTAQEFFHTFNALYENGKQIILTSDKYPNEIEGLEERLVSRFGYGLTVSVDMPDLETRIAILLKKAHDLGQKLPNETAAFIAENVRTNVRELEGALNRVLTTSKFNHKDPTIEVAQACLRDVIKIQEKKVKIDNIQKVVADFYRIRVKDLTSNQRSRNIARPRQIAMSLARELTSHSLPEIGNAFGGRDHTTVMHAVKAITKLRQSNTSISDDYELLLDKISR.

Positions 1–69 (MTTWDKCLKK…TIQECHGNDL (69 aa)) are domain I, interacts with DnaA modulators. Residues 69-154 (LIIEYSNKKF…KEDEEYSFGL (86 aa)) are domain II. The interval 155-371 (PLKEKYVFDS…GALNRVLTTS (217 aa)) is domain III, AAA+ region. 4 residues coordinate ATP: glycine 199, glycine 201, lysine 202, and threonine 203. The segment at 372-491 (KFNHKDPTIE…YELLLDKISR (120 aa)) is domain IV, binds dsDNA.

This sequence belongs to the DnaA family. As to quaternary structure, oligomerizes as a right-handed, spiral filament on DNA at oriC.

Its subcellular location is the cytoplasm. Its function is as follows. Plays an essential role in the initiation and regulation of chromosomal replication. ATP-DnaA binds to the origin of replication (oriC) to initiate formation of the DNA replication initiation complex once per cell cycle. Binds the DnaA box (a 9 base pair repeat at the origin) and separates the double-stranded (ds)DNA. Forms a right-handed helical filament on oriC DNA; dsDNA binds to the exterior of the filament while single-stranded (ss)DNA is stabiized in the filament's interior. The ATP-DnaA-oriC complex binds and stabilizes one strand of the AT-rich DNA unwinding element (DUE), permitting loading of DNA polymerase. After initiation quickly degrades to an ADP-DnaA complex that is not apt for DNA replication. Binds acidic phospholipids. In Francisella tularensis subsp. holarctica (strain FTNF002-00 / FTA), this protein is Chromosomal replication initiator protein DnaA.